The primary structure comprises 169 residues: uncharacterized protein (169 aa).

It localises to the mitochondrion. This is an uncharacterized protein from Paramecium tetraurelia.